The sequence spans 336 residues: Mitochondrial thiamine diphosphate carrier 1 (336 aa).

6 consecutive transmembrane segments (helical) span residues 11–27, 88–105, 127–150, 182–199, 230–246, and 303–322; these read RRAL…GGIS, VPAL…FTVL, YLSY…FDLL, LYSG…YAGL, SVSS…AGTF, and GLFP…FVVY. Solcar repeat units lie at residues 11 to 111, 124 to 210, and 231 to 328; these read RRAL…LKTF, LSPY…FKRS, and VSSF…ISDW.

This sequence belongs to the mitochondrial carrier (TC 2.A.29) family. As to expression, ubiquitous with highest expression in pollen.

Its subcellular location is the mitochondrion inner membrane. Functionally, mitochondrial transporter that mediates uptake of thiamine diphosphate (ThDP) into mitochondria. In Zea mays (Maize), this protein is Mitochondrial thiamine diphosphate carrier 1.